The primary structure comprises 234 residues: Leucyl/phenylalanyl-tRNA--protein transferase (234 aa).

Belongs to the L/F-transferase family.

It localises to the cytoplasm. The enzyme catalyses N-terminal L-lysyl-[protein] + L-leucyl-tRNA(Leu) = N-terminal L-leucyl-L-lysyl-[protein] + tRNA(Leu) + H(+). It catalyses the reaction N-terminal L-arginyl-[protein] + L-leucyl-tRNA(Leu) = N-terminal L-leucyl-L-arginyl-[protein] + tRNA(Leu) + H(+). It carries out the reaction L-phenylalanyl-tRNA(Phe) + an N-terminal L-alpha-aminoacyl-[protein] = an N-terminal L-phenylalanyl-L-alpha-aminoacyl-[protein] + tRNA(Phe). In terms of biological role, functions in the N-end rule pathway of protein degradation where it conjugates Leu, Phe and, less efficiently, Met from aminoacyl-tRNAs to the N-termini of proteins containing an N-terminal arginine or lysine. This Salmonella agona (strain SL483) protein is Leucyl/phenylalanyl-tRNA--protein transferase.